We begin with the raw amino-acid sequence, 464 residues long: tRNA-2-methylthio-N(6)-dimethylallyladenosine synthase (464 aa).

The MTTase N-terminal domain maps to 19–135 (GSYWITTFGC…LENLLGKVDL (117 aa)). Residues cysteine 28, cysteine 64, cysteine 98, cysteine 170, cysteine 174, and cysteine 177 each coordinate [4Fe-4S] cluster. The Radical SAM core domain occupies 156–394 (RESSICGWVN…DLVEKTARSR (239 aa)). Positions 396-464 (QRYIDNIESV…PFSLTGELSL (69 aa)) constitute a TRAM domain.

Belongs to the methylthiotransferase family. MiaB subfamily. In terms of assembly, monomer. The cofactor is [4Fe-4S] cluster.

It localises to the cytoplasm. The catalysed reaction is N(6)-dimethylallyladenosine(37) in tRNA + (sulfur carrier)-SH + AH2 + 2 S-adenosyl-L-methionine = 2-methylsulfanyl-N(6)-dimethylallyladenosine(37) in tRNA + (sulfur carrier)-H + 5'-deoxyadenosine + L-methionine + A + S-adenosyl-L-homocysteine + 2 H(+). In terms of biological role, catalyzes the methylthiolation of N6-(dimethylallyl)adenosine (i(6)A), leading to the formation of 2-methylthio-N6-(dimethylallyl)adenosine (ms(2)i(6)A) at position 37 in tRNAs that read codons beginning with uridine. This Prochlorococcus marinus (strain MIT 9301) protein is tRNA-2-methylthio-N(6)-dimethylallyladenosine synthase.